Here is a 126-residue protein sequence, read N- to C-terminus: MPEPAKSAPAPKKGSKKAVTKAQKKDGKKRKRSRKESYSVYVYKVLKQVHPDTGISSKAMGIMNSFVNDIFERIAGEASRLAHYNKRSTITSREIQTAVRLLLPGELAKHAVSEGTKAVTKYTSSK.

A compositionally biased stretch (low complexity) spans methionine 1–lysine 12. Residues methionine 1 to glutamate 36 are disordered. Residue proline 2 is modified to N-acetylproline. Residue glutamate 3 is modified to ADP-ribosyl glutamic acid. At lysine 6 the chain carries N6-(2-hydroxyisobutyryl)lysine; alternate. An N6-(beta-hydroxybutyryl)lysine; alternate modification is found at lysine 6. Lysine 6 is subject to N6-acetyllysine; alternate. Position 6 is an N6-butyryllysine; alternate (lysine 6). Lysine 6 carries the N6-crotonyllysine; alternate modification. Position 6 is an N6-lactoyllysine; alternate (lysine 6). A Glycyl lysine isopeptide (Lys-Gly) (interchain with G-Cter in SUMO2); alternate cross-link involves residue lysine 6. At serine 7 the chain carries ADP-ribosylserine. Lysine 12 carries the post-translational modification N6-(beta-hydroxybutyryl)lysine; alternate. An N6-acetyllysine; alternate mark is found at lysine 12 and lysine 13. Residues lysine 12 and lysine 13 each carry the N6-crotonyllysine; alternate modification. At lysine 12 the chain carries N6-lactoyllysine; alternate. Lysine 13 carries the post-translational modification N6-(2-hydroxyisobutyryl)lysine; alternate. At serine 15 the chain carries Phosphoserine; by STK4/MST1. N6-acetyllysine; alternate is present on residues lysine 16, lysine 17, lysine 21, and lysine 24. N6-crotonyllysine; alternate occurs at positions 16, 17, 21, and 24. An N6-lactoyllysine; alternate mark is found at lysine 16, lysine 17, lysine 21, and lysine 24. Lysine 17 carries the post-translational modification N6-glutaryllysine; alternate. Residues lysine 21 and lysine 24 each carry the N6-(2-hydroxyisobutyryl)lysine; alternate modification. Lysine 21 carries the post-translational modification N6-(beta-hydroxybutyryl)lysine; alternate. Lysine 21 carries the post-translational modification N6-butyryllysine; alternate. A Glycyl lysine isopeptide (Lys-Gly) (interchain with G-Cter in SUMO2); alternate cross-link involves residue lysine 21. The residue at position 25 (lysine 25) is an N6-(2-hydroxyisobutyryl)lysine. At lysine 35 the chain carries N6-(2-hydroxyisobutyryl)lysine; alternate. Lysine 35 carries the post-translational modification N6-(beta-hydroxybutyryl)lysine; alternate. Lysine 35 carries the N6-crotonyllysine; alternate modification. Residue lysine 35 is modified to N6-glutaryllysine; alternate. An N6-succinyllysine; alternate modification is found at lysine 35. Lysine 35 is covalently cross-linked (Glycyl lysine isopeptide (Lys-Gly) (interchain with G-Cter in ubiquitin); alternate). Glutamate 36 is subject to PolyADP-ribosyl glutamic acid. Position 37 is a phosphoserine; by AMPK (serine 37). Lysine 44, lysine 47, and lysine 58 each carry N6-(2-hydroxyisobutyryl)lysine; alternate. Position 44 is an N6-lactoyllysine; alternate (lysine 44). An N6-glutaryllysine; alternate mark is found at lysine 44 and lysine 47. N6-methyllysine; alternate is present on lysine 47. Lysine 58 bears the N6,N6-dimethyllysine; alternate mark. A Dimethylated arginine modification is found at arginine 80. An N6-(2-hydroxyisobutyryl)lysine; alternate modification is found at lysine 86. An N6-acetyllysine; alternate modification is found at lysine 86. At lysine 86 the chain carries N6-lactoyllysine; alternate. An N6,N6,N6-trimethyllysine; alternate modification is found at lysine 86. Omega-N-methylarginine occurs at positions 87 and 93. An N6-(2-hydroxyisobutyryl)lysine; alternate modification is found at lysine 109. Lysine 109 is modified (N6-(beta-hydroxybutyryl)lysine; alternate). Lysine 109 carries the N6-lactoyllysine; alternate modification. N6-glutaryllysine; alternate is present on lysine 109. The residue at position 109 (lysine 109) is an N6-methyllysine; alternate. Residue serine 113 is glycosylated (O-linked (GlcNAc) serine). A Phosphothreonine modification is found at threonine 116. Lysine 117 and lysine 121 each carry N6-(2-hydroxyisobutyryl)lysine; alternate. Lysine 117 is modified (N6-(beta-hydroxybutyryl)lysine; alternate). Residues lysine 117 and lysine 121 each carry the N6-lactoyllysine; alternate modification. An N6-glutaryllysine; alternate mark is found at lysine 117 and lysine 121. N6-succinyllysine; alternate is present on residues lysine 117 and lysine 121. N6-methylated lysine; alternate is present on lysine 117. Lysine 121 is covalently cross-linked (Glycyl lysine isopeptide (Lys-Gly) (interchain with G-Cter in ubiquitin); alternate).

This sequence belongs to the histone H2B family. As to quaternary structure, the nucleosome is a histone octamer containing two molecules each of H2A, H2B, H3 and H4 assembled in one H3-H4 heterotetramer and two H2A-H2B heterodimers. The octamer wraps approximately 147 bp of DNA. Interacts with VRK1; the interaction is mediated by the nucleosome acidic patch, a cluster of negatively charged residues of H2A and H2B forming a cleft within the nucleosome core. Post-translationally, monoubiquitination at Lys-35 (H2BK34Ub) by the MSL1/MSL2 dimer is required for histone H3 'Lys-4' (H3K4me) and 'Lys-79' (H3K79me) methylation and transcription activation at specific gene loci, such as HOXA9 and MEIS1 loci. Similarly, monoubiquitination at Lys-121 (H2BK120Ub) by the RNF20/40 complex gives a specific tag for epigenetic transcriptional activation and is also prerequisite for histone H3 'Lys-4' and 'Lys-79' methylation. It also functions cooperatively with the FACT dimer to stimulate elongation by RNA polymerase II. H2BK120Ub also acts as a regulator of mRNA splicing: deubiquitination by USP49 is required for efficient cotranscriptional splicing of a large set of exons. Phosphorylated on Ser-15 (H2BS14ph) by STK4/MST1 during apoptosis; which facilitates apoptotic chromatin condensation. Also phosphorylated on Ser-15 in response to DNA double strand breaks (DSBs), and in correlation with somatic hypermutation and immunoglobulin class-switch recombination. Phosphorylation at Ser-37 (H2BS36ph) by AMPK in response to stress promotes transcription. In terms of processing, glcNAcylation at Ser-113 promotes monoubiquitination of Lys-121. It fluctuates in response to extracellular glucose, and associates with transcribed genes. Post-translationally, ADP-ribosylated by PARP1 or PARP2 on Ser-7 (H2BS6ADPr) in response to DNA damage. H2BS6ADPr promotes recruitment of CHD1L. Mono-ADP-ribosylated on Glu-3 (H2BE2ADPr) by PARP3 in response to single-strand breaks. Poly ADP-ribosylation on Glu-36 (H2BE35ADPr) by PARP1 regulates adipogenesis: it inhibits phosphorylation at Ser-37 (H2BS36ph), thereby blocking expression of pro-adipogenetic genes. Crotonylation (Kcr) is specifically present in male germ cells and marks testis-specific genes in post-meiotic cells, including X-linked genes that escape sex chromosome inactivation in haploid cells. Crotonylation marks active promoters and enhancers and confers resistance to transcriptional repressors. It is also associated with post-meiotically activated genes on autosomes. In terms of processing, hydroxybutyrylation of histones is induced by starvation. Post-translationally, lactylated in macrophages by EP300/P300 by using lactoyl-CoA directly derived from endogenous or exogenous lactate, leading to stimulates gene transcription.

The protein localises to the nucleus. It localises to the chromosome. Functionally, core component of nucleosome. Nucleosomes wrap and compact DNA into chromatin, limiting DNA accessibility to the cellular machineries which require DNA as a template. Histones thereby play a central role in transcription regulation, DNA repair, DNA replication and chromosomal stability. DNA accessibility is regulated via a complex set of post-translational modifications of histones, also called histone code, and nucleosome remodeling. The sequence is that of Histone H2B type 1-C/E/G from Mus musculus (Mouse).